The chain runs to 344 residues: Cell adhesion molecule CEACAM6 (344 aa).

An N-terminal signal peptide occupies residues 1–34 (MGPPSAPPCRLHVPWKEVLLTASLLTFWNPPTTA). The 108-residue stretch at 35 to 142 (KLTIESTPFN…EATGQFHVYP (108 aa)) folds into the Ig-like V-type domain. Residues N104, N111, N115, N152, N173, N197, N224, N256, N274, N288, N292, and N309 are each glycosylated (N-linked (GlcNAc...) asparagine). 2 Ig-like C2-type domains span residues 145-232 (PKPS…VTLN) and 240-314 (PTIS…TTVT). C167 and C215 form a disulfide bridge. The cysteines at positions 259 and 299 are disulfide-linked. A lipid anchor (GPI-anchor amidated glycine) is attached at G320. Residues 321–344 (SAPVLSAVATVGITIGVLARVALI) constitute a propeptide, removed in mature form.

This sequence belongs to the immunoglobulin superfamily. CEA family. As to quaternary structure, homodimer; homodimerizes via its Ig-like V-type domain. Heterodimer with CEACAM8; heterodimerizes via its Ig-like V-type domain. In terms of processing, glycosylated. As to expression, expressed in neutrophils. Expressed in columnar epithelial and goblet cells of the colon. Expressed in numerous tumor cell lines (at protein level).

Its subcellular location is the cell membrane. It is found in the apical cell membrane. The protein resides in the cell surface. In terms of biological role, cell surface glycoprotein that plays a role in cell adhesion and tumor progression. Intercellular adhesion occurs in a calcium- and fibronectin-independent manner. Mediates homophilic and heterophilic cell adhesion with other carcinoembryonic antigen-related cell adhesion molecules, such as CEACAM5 and CEACAM8. Heterophilic interaction with CEACAM8 occurs in activated neutrophils. Plays a role in neutrophil adhesion to cytokine-activated endothelial cells. Plays a role in cell migration and cell adhesion to endothelial cells. The chain is Cell adhesion molecule CEACAM6 from Homo sapiens (Human).